The following is a 61-amino-acid chain: UPF0391 membrane protein Aave_0978 (61 aa).

The next 2 helical transmembrane spans lie at 5–25 and 33–53; these read AIIF…GVAA and ILFF…VLGV.

This sequence belongs to the UPF0391 family.

The protein resides in the cell membrane. The protein is UPF0391 membrane protein Aave_0978 of Paracidovorax citrulli (strain AAC00-1) (Acidovorax citrulli).